A 408-amino-acid polypeptide reads, in one-letter code: Arginine biosynthesis bifunctional protein ArgJ (408 aa).

Substrate-binding residues include Thr158, Lys184, Thr195, Glu281, Asn403, and Thr408. The active-site Nucleophile is the Thr195.

Belongs to the ArgJ family. As to quaternary structure, heterotetramer of two alpha and two beta chains.

It is found in the cytoplasm. It catalyses the reaction N(2)-acetyl-L-ornithine + L-glutamate = N-acetyl-L-glutamate + L-ornithine. The enzyme catalyses L-glutamate + acetyl-CoA = N-acetyl-L-glutamate + CoA + H(+). Its pathway is amino-acid biosynthesis; L-arginine biosynthesis; L-ornithine and N-acetyl-L-glutamate from L-glutamate and N(2)-acetyl-L-ornithine (cyclic): step 1/1. It functions in the pathway amino-acid biosynthesis; L-arginine biosynthesis; N(2)-acetyl-L-ornithine from L-glutamate: step 1/4. Its function is as follows. Catalyzes two activities which are involved in the cyclic version of arginine biosynthesis: the synthesis of N-acetylglutamate from glutamate and acetyl-CoA as the acetyl donor, and of ornithine by transacetylation between N(2)-acetylornithine and glutamate. This Shouchella clausii (strain KSM-K16) (Alkalihalobacillus clausii) protein is Arginine biosynthesis bifunctional protein ArgJ.